Reading from the N-terminus, the 295-residue chain is MNSKCETIKPQVVNSILDYWNLLKPKIMYLVVLTGITGMIIAPGSIHPFIAIISTLCIALGSGAAGAINMWYDSDIDALMTRTKNRPIPAGKISKSSAIELGLVLSVISVTVMMISVNYISGILLAISIGFYSFAYTMYLKRRTPQNIVIGGIAGAIPPIIGWTSVTSSISIESLILFLIIFMWTPPHFWALSLLNYQEYEKAKIPMLPVTHGIFVTKVHILVYSIVLFIITLLPGLFLKDYLLYEICAIPLGITFLFHAFKVFTSSNYYKYKAMFTYSVAYLFILFICIILASF.

Transmembrane regions (helical) follow at residues 27-46 (IMYL…PGSI), 50-72 (IAII…NMWY), 93-115 (ISKS…VMMI), 119-136 (YISG…SFAY), 148-168 (IVIG…SVTS), 175-195 (LILF…LSLL), 219-239 (VHIL…GLFL), 244-264 (LYEI…FKVF), and 275-295 (MFTY…LASF).

This sequence belongs to the UbiA prenyltransferase family. Protoheme IX farnesyltransferase subfamily.

It is found in the cell inner membrane. The enzyme catalyses heme b + (2E,6E)-farnesyl diphosphate + H2O = Fe(II)-heme o + diphosphate. It functions in the pathway porphyrin-containing compound metabolism; heme O biosynthesis; heme O from protoheme: step 1/1. Its function is as follows. Converts heme B (protoheme IX) to heme O by substitution of the vinyl group on carbon 2 of heme B porphyrin ring with a hydroxyethyl farnesyl side group. The protein is Protoheme IX farnesyltransferase of Ehrlichia canis (strain Jake).